The following is a 126-amino-acid chain: Holo-[acyl-carrier-protein] synthase (126 aa).

The Mg(2+) site is built by Asp-9 and Glu-58.

Belongs to the P-Pant transferase superfamily. AcpS family. Requires Mg(2+) as cofactor.

The protein localises to the cytoplasm. It carries out the reaction apo-[ACP] + CoA = holo-[ACP] + adenosine 3',5'-bisphosphate + H(+). Transfers the 4'-phosphopantetheine moiety from coenzyme A to a Ser of acyl-carrier-protein. This is Holo-[acyl-carrier-protein] synthase from Vibrio vulnificus (strain YJ016).